The primary structure comprises 76 residues: Sec-independent protein translocase protein TatA (76 aa).

Residues 1-21 (MGSFSIWHWLIVLLIVVLVFG) form a helical membrane-spanning segment. The segment at 44–76 (RDGSTAPADPAQQVTANKSADANTVDVEAKQKS) is disordered. The span at 55-65 (QQVTANKSADA) shows a compositional bias: polar residues.

This sequence belongs to the TatA/E family. As to quaternary structure, the Tat system comprises two distinct complexes: a TatABC complex, containing multiple copies of TatA, TatB and TatC subunits, and a separate TatA complex, containing only TatA subunits. Substrates initially bind to the TatABC complex, which probably triggers association of the separate TatA complex to form the active translocon.

It localises to the cell inner membrane. Functionally, part of the twin-arginine translocation (Tat) system that transports large folded proteins containing a characteristic twin-arginine motif in their signal peptide across membranes. TatA could form the protein-conducting channel of the Tat system. In Methylibium petroleiphilum (strain ATCC BAA-1232 / LMG 22953 / PM1), this protein is Sec-independent protein translocase protein TatA.